The sequence spans 1405 residues: DNA-directed RNA polymerase subunit beta' (1405 aa).

Zn(2+)-binding residues include C71, C73, C86, and C89. Positions 462, 464, and 466 each coordinate Mg(2+). The Zn(2+) site is built by C820, C893, C900, and C903.

The protein belongs to the RNA polymerase beta' chain family. As to quaternary structure, the RNAP catalytic core consists of 2 alpha, 1 beta, 1 beta' and 1 omega subunit. When a sigma factor is associated with the core the holoenzyme is formed, which can initiate transcription. It depends on Mg(2+) as a cofactor. Requires Zn(2+) as cofactor.

It carries out the reaction RNA(n) + a ribonucleoside 5'-triphosphate = RNA(n+1) + diphosphate. Functionally, DNA-dependent RNA polymerase catalyzes the transcription of DNA into RNA using the four ribonucleoside triphosphates as substrates. This is DNA-directed RNA polymerase subunit beta' from Methylorubrum extorquens (strain CM4 / NCIMB 13688) (Methylobacterium extorquens).